We begin with the raw amino-acid sequence, 180 residues long: NADH-quinone oxidoreductase subunit I (180 aa).

4Fe-4S ferredoxin-type domains lie at 48-80 and 90-119; these read IVLT…LQKA and EFFR…LTPD. Residues cysteine 60, cysteine 63, cysteine 66, cysteine 70, cysteine 99, cysteine 102, cysteine 105, and cysteine 109 each contribute to the [4Fe-4S] cluster site.

Belongs to the complex I 23 kDa subunit family. NDH-1 is composed of 13 different subunits. Subunits NuoA, H, J, K, L, M, N constitute the membrane sector of the complex. It depends on [4Fe-4S] cluster as a cofactor.

It is found in the cell inner membrane. It catalyses the reaction a quinone + NADH + 5 H(+)(in) = a quinol + NAD(+) + 4 H(+)(out). Its function is as follows. NDH-1 shuttles electrons from NADH, via FMN and iron-sulfur (Fe-S) centers, to quinones in the respiratory chain. The immediate electron acceptor for the enzyme in this species is believed to be ubiquinone. Couples the redox reaction to proton translocation (for every two electrons transferred, four hydrogen ions are translocated across the cytoplasmic membrane), and thus conserves the redox energy in a proton gradient. The chain is NADH-quinone oxidoreductase subunit I from Sodalis glossinidius (strain morsitans).